Consider the following 333-residue polypeptide: Small GTPase-like protein LIP2 (333 aa).

A small GTPase-like region spans residues 11 to 288; sequence NKEHMVAPLC…YKYNTLPQHN (278 aa). GTP-binding positions include 29-36, 90-94, and 160-163; these read GDSGVGKS, DVSGH, and NKAD. Positions 242 to 253 are enriched in polar residues; it reads SPSSAWSLSHAP. A disordered region spans residues 242–265; it reads SPSSAWSLSHAPSQRLDEGTSDED.

It belongs to the small GTPase superfamily.

In Arabidopsis thaliana (Mouse-ear cress), this protein is Small GTPase-like protein LIP2.